A 322-amino-acid polypeptide reads, in one-letter code: MSKDYRVLLYYYYTTIEDPEGFAKEHLAFCKSLQLKGRVLVAKEGINGTVSGLKEHTDAYMEAMKANPLFEGIVFKVDEEEQHVFKKMHVRPRPELVTLRLNEDDVNPNELTGKHLSPKEWREAMLAEDTVVIDARNDYEYDVGHFRGAIRPDIKAFRELPDWIRQNKEQFENKRILTYCTGGIRCEKFSGWLKKEGFEDVAQLDGGIVTYGKDPEVKGELWDGKCYVFDERLTVPINHVAPTVVGKDYFDGKPCERYVNCANPECNKQILCSEENEHKYLRGCTPECRVHPRNLYVKEHQLSPEEHQARLDALGEKLPARL.

The region spanning 126-220 (LAEDTVVIDA…YGKDPEVKGE (95 aa)) is the Rhodanese domain. Catalysis depends on Cys180, which acts as the Cysteine persulfide intermediate.

It belongs to the TrhO family.

The catalysed reaction is uridine(34) in tRNA + AH2 + O2 = 5-hydroxyuridine(34) in tRNA + A + H2O. Its function is as follows. Catalyzes oxygen-dependent 5-hydroxyuridine (ho5U) modification at position 34 in tRNAs. The polypeptide is tRNA uridine(34) hydroxylase (Shouchella clausii (strain KSM-K16) (Alkalihalobacillus clausii)).